Reading from the N-terminus, the 377-residue chain is Aquaporin-2 (377 aa).

The Cytoplasmic portion of the chain corresponds to 1–14 (MAANKGINGGIKNH). Residues 15 to 35 (FIAFLGEFVGTFLFLFFAYGG) form a helical membrane-spanning segment. The Extracellular portion of the chain corresponds to 36-56 (TQTANQTSQKNPSIVASPDIN). N-linked (GlcNAc...) asparagine glycosylation occurs at asparagine 40. A helical membrane pass occupies residues 57-77 (QLLYIALIFGFSLTVNVWIFF). The Cytoplasmic portion of the chain corresponds to 78–87 (RVSGGLFNPA). Residues 85–87 (NPA) carry the NPA 1 motif. A helical transmembrane segment spans residues 88–108 (VTIALCLVGVVGPVRSIFIFI). Residues 109 to 144 (AQVVASIAAAAAVRGLLPGDTVLFSCALAPGTSIAQ) are Extracellular-facing. A helical membrane pass occupies residues 145–165 (GLFLEMFFTIELVFTILMLAA). The Cytoplasmic segment spans residues 166 to 171 (EKTKVT). The chain crosses the membrane as a helical span at residues 172 to 192 (FVAPVGIGLSLFVAELMGVAW). The Extracellular portion of the chain corresponds to 193–215 (TGGALNPARAFGAEVIGGFRGYH). The NPA 2 signature appears at 198-200 (NPA). A helical membrane pass occupies residues 216 to 236 (WIYWLGPLMGAVLAAGFYKVI). Residues 237 to 377 (KFLNYEQVNG…ANAQNRAKTP (141 aa)) are Cytoplasmic-facing. 2 disordered regions span residues 278 to 332 (LFQT…RENE) and 358 to 377 (RLSG…AKTP). 2 stretches are compositionally biased toward polar residues: residues 315-328 (PAQQ…ASTI) and 368-377 (ANAQNRAKTP).

The protein belongs to the MIP/aquaporin (TC 1.A.8) family.

It is found in the membrane. It carries out the reaction H2O(in) = H2O(out). The enzyme catalyses glycerol(in) = glycerol(out). Functionally, water channel required to facilitate the transport of water across membranes. Involved in conidiation. The polypeptide is Aquaporin-2 (Botryotinia fuckeliana (strain B05.10) (Noble rot fungus)).